A 224-amino-acid chain; its full sequence is Proteasome subunit beta (224 aa).

Positions 1-6 (MDVMKG) are cleaved as a propeptide — removed in mature form; by autocatalysis. The Nucleophile role is filled by T7.

This sequence belongs to the peptidase T1B family. In terms of assembly, the 20S proteasome core is composed of 14 alpha and 14 beta subunits that assemble into four stacked heptameric rings, resulting in a barrel-shaped structure. The two inner rings, each composed of seven catalytic beta subunits, are sandwiched by two outer rings, each composed of seven alpha subunits. The catalytic chamber with the active sites is on the inside of the barrel. Has a gated structure, the ends of the cylinder being occluded by the N-termini of the alpha-subunits. Is capped at one or both ends by the proteasome regulatory ATPase, PAN.

Its subcellular location is the cytoplasm. It carries out the reaction Cleavage of peptide bonds with very broad specificity.. The formation of the proteasomal ATPase PAN-20S proteasome complex, via the docking of the C-termini of PAN into the intersubunit pockets in the alpha-rings, triggers opening of the gate for substrate entry. Interconversion between the open-gate and close-gate conformations leads to a dynamic regulation of the 20S proteasome proteolysis activity. Its function is as follows. Component of the proteasome core, a large protease complex with broad specificity involved in protein degradation. This Methanocaldococcus fervens (strain DSM 4213 / JCM 15782 / AG86) (Methanococcus fervens) protein is Proteasome subunit beta.